Here is a 62-residue protein sequence, read N- to C-terminus: Ranacyclin-T (62 aa).

An N-terminal signal peptide occupies residues 1 to 22 (MFTMKKTLLVLFFLGVVSLSLC). The propeptide occupies 23–43 (VEERDADEEDGGEVMEEEVKR). Residues Cys49 and Cys59 are joined by a disulfide bond. Lys60 is modified (lysine amide).

This sequence belongs to the frog skin active peptide (FSAP) family. Brevinin subfamily. In terms of tissue distribution, expressed by the skin granular glands.

The protein resides in the secreted. Its function is as follows. Has antibacterial activity against Gram-positive bacteria B.megaterium Bm11, S.lentus and M.luteus, and Gram-negative bacteria E.coli D22, Y.pseudotuberculosis YP III and P.syringae pv tabaci, and antifungal activity against C.albicans ATCC 10231, C.tropicalis, C.guiller-mondii and P.nicotianae spores. Has weak hemolytic activity. The mature peptide inserts into the hydrophobic core of the bacterial cell membrane and increases permeability without disrupting membrane integrity. Probably binds to the outer membrane surface before aggregating to form transmembrane pores. The protein is Ranacyclin-T (RNCT) of Rana temporaria (European common frog).